The chain runs to 137 residues: Large ribosomal subunit protein uL16 (137 aa).

It belongs to the universal ribosomal protein uL16 family. As to quaternary structure, part of the 50S ribosomal subunit.

Functionally, binds 23S rRNA and is also seen to make contacts with the A and possibly P site tRNAs. In Allorhizobium ampelinum (strain ATCC BAA-846 / DSM 112012 / S4) (Agrobacterium vitis (strain S4)), this protein is Large ribosomal subunit protein uL16.